Consider the following 184-residue polypeptide: MTNVTDQQLELIKKSIQFVPNYPKKGILFRDITELLKNPQAYSASITLLAYYYRNHKLTKVVGIEARGFLFSAPLALILKLGFIPARKSGRLPRDTIREPYILEYDNGFLEIHTDSITPGDQVLIIDDLLATGGTIAAAVKLIRRLGGEVNHAGFIIDLENLGGKSLLKEIGINSYSLVTFSNH.

Belongs to the purine/pyrimidine phosphoribosyltransferase family. In terms of assembly, homodimer.

Its subcellular location is the cytoplasm. It catalyses the reaction AMP + diphosphate = 5-phospho-alpha-D-ribose 1-diphosphate + adenine. Its pathway is purine metabolism; AMP biosynthesis via salvage pathway; AMP from adenine: step 1/1. In terms of biological role, catalyzes a salvage reaction resulting in the formation of AMP, that is energically less costly than de novo synthesis. The sequence is that of Adenine phosphoribosyltransferase from Blochmanniella pennsylvanica (strain BPEN).